The sequence spans 310 residues: Phosphoribosylaminoimidazole-succinocarboxamide synthase (310 aa).

The protein belongs to the SAICAR synthetase family.

The catalysed reaction is 5-amino-1-(5-phospho-D-ribosyl)imidazole-4-carboxylate + L-aspartate + ATP = (2S)-2-[5-amino-1-(5-phospho-beta-D-ribosyl)imidazole-4-carboxamido]succinate + ADP + phosphate + 2 H(+). It participates in purine metabolism; IMP biosynthesis via de novo pathway; 5-amino-1-(5-phospho-D-ribosyl)imidazole-4-carboxamide from 5-amino-1-(5-phospho-D-ribosyl)imidazole-4-carboxylate: step 1/2. This Stenotrophomonas maltophilia (strain K279a) protein is Phosphoribosylaminoimidazole-succinocarboxamide synthase.